The chain runs to 1005 residues: Defense-associated sirtuin 2 (1005 aa).

The interval 1 to 295 (MVKVDLESKR…YSAVMDLLIE (295 aa)) is SIR2. The tract at residues 56–111 (YPQWWRLVDKYHEELYGSPKKGNYSSDEYLRIPQIFYNVKGEMAFDGILKDFFQVD) is inter-dimer interaction. Catalysis depends on residues Tyr134, Asp135, and His171. Residues 296-548 (SQENKFITKD…YKILEFLSDN (253 aa)) are MID. The interval 549-1005 (QFLYDDTVKL…YLEILMNYFI (457 aa)) is CTD.

In terms of assembly, homotetramer (dimer of dimers). Homodimer. The SIR2 domains are arranged in a central core, adopting a head-to-head arrangement, while the CTDs are positioned at the periphery of the complex. Tetramerization is necessary for the activation of NADase activity. The NADase enzymatic activity of this homotetrameric form is autoinhibited. The activated form of DSR2 (after binding to the phage tube protein) exists as tetramers and dimers, with the tetramers exhibiting more NADase activity. Each tetramer binds 4 NAD(+) molecules. As to quaternary structure, (Microbial infection) Interacts (via C-terminus) with phage SPR tail tube monomer protein (via N-terminus) in a 4:4 DSR2-Tube assembly; this interaction induces a conformation change of the tube protein and activates the NADase activity of DSR2. (Microbial infection) Interacts (via C-terminus) with phage SPbeta DSAD1 in a 4:2 ratio; this interaction prevents activation of the NADase defense activity of DSR2.

It carries out the reaction NAD(+) + H2O = ADP-D-ribose + nicotinamide + H(+). (Microbial infection) NADase activity is activated through the binding of SPR phage tail tube monomer protein. NADase activity is inhibited through the binding to the phage SPbeta DSR anti-defense 1 (DSAD1). Its function is as follows. Anti-phage defense protein that is activated through the binding to the phage tail tube protein monomer and which hydrolyzes NAD+ upon activation (NADase activity). The resulting depletion of NAD(+) leads to an abortive infection. This chain is Defense-associated sirtuin 2, found in Bacillus subtilis.